The following is a 246-amino-acid chain: Uridylate kinase (246 aa).

ATP is bound at residue Lys-11–Gly-14. Position 53 (Gly-53) interacts with UMP. ATP is bound by residues Gly-54 and Arg-58. UMP is bound by residues Asp-74 and Thr-135–Thr-142. Positions 162, 169, and 172 each coordinate ATP.

This sequence belongs to the UMP kinase family. In terms of assembly, homohexamer.

Its subcellular location is the cytoplasm. The enzyme catalyses UMP + ATP = UDP + ADP. The protein operates within pyrimidine metabolism; CTP biosynthesis via de novo pathway; UDP from UMP (UMPK route): step 1/1. With respect to regulation, inhibited by UTP. Its function is as follows. Catalyzes the reversible phosphorylation of UMP to UDP. The sequence is that of Uridylate kinase from Chlamydia abortus (strain DSM 27085 / S26/3) (Chlamydophila abortus).